Consider the following 598-residue polypeptide: Aspartate--tRNA ligase (598 aa).

Glu182 contributes to the L-aspartate binding site. Positions 206-209 (QLFK) are aspartate. Position 228 (Arg228) interacts with L-aspartate. ATP contacts are provided by residues 228 to 230 (RDE) and Gln237. His456 contacts L-aspartate. Glu490 contacts ATP. Position 497 (Arg497) interacts with L-aspartate. Residue 542-545 (GVDR) coordinates ATP.

The protein belongs to the class-II aminoacyl-tRNA synthetase family. Type 1 subfamily. Homodimer.

The protein localises to the cytoplasm. It carries out the reaction tRNA(Asp) + L-aspartate + ATP = L-aspartyl-tRNA(Asp) + AMP + diphosphate. Catalyzes the attachment of L-aspartate to tRNA(Asp) in a two-step reaction: L-aspartate is first activated by ATP to form Asp-AMP and then transferred to the acceptor end of tRNA(Asp). The chain is Aspartate--tRNA ligase from Agathobacter rectalis (strain ATCC 33656 / DSM 3377 / JCM 17463 / KCTC 5835 / VPI 0990) (Eubacterium rectale).